Consider the following 392-residue polypeptide: Sulfate adenylyltransferase (392 aa).

Belongs to the sulfate adenylyltransferase family.

It carries out the reaction sulfate + ATP + H(+) = adenosine 5'-phosphosulfate + diphosphate. It participates in sulfur metabolism; hydrogen sulfide biosynthesis; sulfite from sulfate: step 1/3. This chain is Sulfate adenylyltransferase, found in Trichormus variabilis (strain ATCC 29413 / PCC 7937) (Anabaena variabilis).